Consider the following 601-residue polypeptide: Coronin-like protein crn1 (601 aa).

WD repeat units lie at residues 79-119 (GHTA…TVME), 132-172 (GHSR…AHVS), 174-213 (KMDV…PVSV), 220-260 (AKNP…EPIG), and 266-306 (DTGS…FHYL). Disordered stretches follow at residues 361–386 (SDIY…KDAQ) and 407–540 (SATV…VEEK). 3 stretches are compositionally biased toward basic and acidic residues: residues 419–429 (KHNEEKVETPK), 437–453 (KPKE…EPEV), and 462–495 (KVEE…EKSF). Phosphoserine occurs at positions 500 and 501. A compositionally biased stretch (basic and acidic residues) spans 507–526 (EDVKKEPSEEKKLEVSDEAP). Position 553 is a phosphoserine (Ser-553). Residues 556–600 (NLADLNKRFEGFEKRYEEELAIRDWKIAQLEDKLAKLTEAIKEKC) adopt a coiled-coil conformation.

The protein belongs to the WD repeat coronin family. Binds to F-actin.

The protein is Coronin-like protein crn1 (crn1) of Schizosaccharomyces pombe (strain 972 / ATCC 24843) (Fission yeast).